Here is a 636-residue protein sequence, read N- to C-terminus: Ubiquitin-activating enzyme E1-like (636 aa).

ATP is bound by residues 28-33 (GAGGIG), Asp-52, 60-63 (NLNR), Lys-76, and 121-126 (DNLAAR). Residues Cys-162 and Cys-165 each contribute to the Zn(2+) site. Residue Cys-177 is the Glycyl thioester intermediate of the active site. Residues Cys-435 and Cys-438 each coordinate Zn(2+). The segment at 581–636 (DGIVILDDDEGEITIDAEPINGSKKRPVDTEISEAPSNKRTKLVNEPTNSDIVELD) is disordered. Residues 586-595 (LDDDEGEITI) are compositionally biased toward acidic residues. The Nuclear localization signal signature appears at 619–622 (KRTK). The segment covering 626 to 636 (EPTNSDIVELD) has biased composition (polar residues).

It belongs to the ubiquitin-activating E1 family. In terms of assembly, heterodimer of UBA2 and AOS1. The complex binds SMT3. In terms of processing, multiubiquitinated in vivo.

It is found in the nucleus. It functions in the pathway protein modification; protein sumoylation. Its function is as follows. The dimeric enzyme acts as a SMT3 E1 ligase. It mediates ATP-dependent activation of SMT3 and formation of a thioester with a conserved cysteine residue on AOS1. The chain is Ubiquitin-activating enzyme E1-like (UBA2) from Saccharomyces cerevisiae (strain ATCC 204508 / S288c) (Baker's yeast).